Consider the following 824-residue polypeptide: Spindle-defective protein 2 (824 aa).

Composition is skewed to acidic residues over residues 16–27 and 35–44; these read EIEDSPIDDNDN and GDVELEEEEV. A disordered region spans residues 16 to 98; that stretch reads EIEDSPIDDN…SRPASVMSDK (83 aa). Polar residues predominate over residues 59-70; that stretch reads TNMTNPKVNDLT. Over residues 81 to 98 the composition is skewed to low complexity; sequence SAASSRSASRPASVMSDK. Residues 111-131 adopt a coiled-coil conformation; it reads ENAIEEYTNQVFADENKADLL. The tract at residues 189–252 is disordered; sequence RAKPGANDNE…GQYQGPNFDL (64 aa). Polar residues predominate over residues 207–225; that stretch reads NVPTTSDKSAFITSPMNST. The stretch at 304-324 forms a coiled coil; sequence NNKNQDLFAALEEARKRRAAQ. 2 disordered regions span residues 342–372 and 433–455; these read KPTS…LTTS and NNGN…VRTM. Over residues 349-366 the composition is skewed to low complexity; the sequence is SGNVVSSTSNDNTTAASS.

As to quaternary structure, interacts with sas-7 (via C-terminus); may be recruited to centrioles by sas-7.

The protein localises to the cytoplasm. It is found in the cytoskeleton. The protein resides in the microtubule organizing center. It localises to the centrosome. Its subcellular location is the centriole. Required both for centrosome duplication and maturation. Required for pericentriolar material (PCM) recruitment. This chain is Spindle-defective protein 2, found in Caenorhabditis elegans.